The primary structure comprises 445 residues: Glycine--tRNA ligase (445 aa).

The substrate site is built by Arg-97 and Glu-145. ATP contacts are provided by residues 177–179 (RNE), 187–192 (FRTCEF), 262–263 (EV), and 308–311 (GLTR). 192–196 (FEQME) contributes to the substrate binding site. Residue 304-308 (ETSAG) participates in substrate binding.

This sequence belongs to the class-II aminoacyl-tRNA synthetase family. As to quaternary structure, homodimer.

The protein localises to the cytoplasm. It catalyses the reaction tRNA(Gly) + glycine + ATP = glycyl-tRNA(Gly) + AMP + diphosphate. In terms of biological role, catalyzes the attachment of glycine to tRNA(Gly). In Borreliella burgdorferi (strain ATCC 35210 / DSM 4680 / CIP 102532 / B31) (Borrelia burgdorferi), this protein is Glycine--tRNA ligase.